The sequence spans 331 residues: D-galactose/methyl-galactoside binding periplasmic protein MglB (331 aa).

The first 24 residues, 1–24, serve as a signal peptide directing secretion; the sequence is MKKTAVLSTVAFAIALGSASASFA. Residues Asp38 and Asn115 each contribute to the beta-D-galactose site. 2 residues coordinate beta-D-glucose: Asp38 and Asn115. Positions 158, 160, 162, 164, and 166 each coordinate Ca(2+). 3 residues coordinate beta-D-galactose: His176, Asp178, and Arg182. Positions 176, 178, and 182 each coordinate beta-D-glucose. Glu229 serves as a coordination point for Ca(2+). The beta-D-galactose site is built by Asn235, Asp259, and Asn279. The beta-D-glucose site is built by Asn235, Asp259, and Asn279.

Belongs to the bacterial solute-binding protein 2 family. In terms of assembly, the ABC transporter complex is composed of one ATP-binding protein (MglA), two transmembrane proteins (MglC) and a solute-binding protein (MglB).

The protein resides in the periplasm. Part of the ABC transporter complex MglABC involved in galactose/methyl galactoside import. The polypeptide is D-galactose/methyl-galactoside binding periplasmic protein MglB (mglB) (Haemophilus influenzae (strain ATCC 51907 / DSM 11121 / KW20 / Rd)).